A 348-amino-acid polypeptide reads, in one-letter code: Protein RecA (348 aa).

64 to 71 (GPESSGKT) provides a ligand contact to ATP. A compositionally biased stretch (basic and acidic residues) spans 325–335 (YEIDGSNKEPL). A disordered region spans residues 325–348 (YEIDGSNKEPLDEGEETLSLLDDE). The span at 336 to 348 (DEGEETLSLLDDE) shows a compositional bias: acidic residues.

Belongs to the RecA family.

It localises to the cytoplasm. Functionally, can catalyze the hydrolysis of ATP in the presence of single-stranded DNA, the ATP-dependent uptake of single-stranded DNA by duplex DNA, and the ATP-dependent hybridization of homologous single-stranded DNAs. It interacts with LexA causing its activation and leading to its autocatalytic cleavage. In Listeria monocytogenes serotype 4b (strain CLIP80459), this protein is Protein RecA.